Reading from the N-terminus, the 403-residue chain is Tyrosine--tRNA ligase (403 aa).

The 'HIGH' region motif lies at 46 to 55; that stretch reads PTAPDLHLGH. The short motif at 230–234 is the 'KMSKS' region element; the sequence is KMSKS. Residue Lys-233 participates in ATP binding. Positions 342–402 constitute an S4 RNA-binding domain; sequence LFITQILNQA…GKKAYAKVTV (61 aa).

It belongs to the class-I aminoacyl-tRNA synthetase family. TyrS type 2 subfamily. In terms of assembly, homodimer.

The protein resides in the cytoplasm. The enzyme catalyses tRNA(Tyr) + L-tyrosine + ATP = L-tyrosyl-tRNA(Tyr) + AMP + diphosphate + H(+). Functionally, catalyzes the attachment of tyrosine to tRNA(Tyr) in a two-step reaction: tyrosine is first activated by ATP to form Tyr-AMP and then transferred to the acceptor end of tRNA(Tyr). This is Tyrosine--tRNA ligase from Psychrobacter arcticus (strain DSM 17307 / VKM B-2377 / 273-4).